Here is an 868-residue protein sequence, read N- to C-terminus: Envelope glycoprotein gp160 (868 aa).

The signal sequence occupies residues 1–33 (MAMRAKGIRKNCQHLWRWGTMLLGMLMICSAAA). Over 34-696 (NLWVTVYYGV…ITKWLWYIKI (663 aa)) the chain is Extracellular. Residues cysteine 55 and cysteine 75 are joined by a disulfide bond. Residues asparagine 89, asparagine 131, asparagine 138, asparagine 139, asparagine 142, asparagine 162, asparagine 166, asparagine 195, asparagine 198, asparagine 208, asparagine 245, asparagine 252, asparagine 273, asparagine 287, asparagine 300, asparagine 306, asparagine 312, asparagine 342, asparagine 349, asparagine 365, and asparagine 371 are each glycosylated (N-linked (GlcNAc...) asparagine; by host). Disulfide bonds link cysteine 120–cysteine 216, cysteine 127–cysteine 207, cysteine 132–cysteine 163, cysteine 229–cysteine 258, and cysteine 239–cysteine 250. Positions 132–162 (CTDLNTNNTTNTTELSIIVVWEQRGKGEMRN) are V1. A V2 region spans residues 163 to 207 (CSFNITTSIRDKVQREYALFYKLDVEPIDDNKNTTNNTKYRLINC). Residues 307–340 (CTRPNNHTRKRVTLGPGRVWYTTGEILGNIRQAH) are V3. A disulfide bridge connects residues cysteine 307 and cysteine 341. The segment at 373–383 (SSGGDPEIVMH) is CD4-binding loop. 2 disulfide bridges follow: cysteine 387–cysteine 456 and cysteine 394–cysteine 429. The segment at 394–429 (CNSTQLFNSAWNVTSNGTWSVTRKQKDTGDIITLPC) is V4. N-linked (GlcNAc...) asparagine; by host glycans are attached at residues asparagine 395, asparagine 405, asparagine 409, asparagine 459, and asparagine 473. V5 regions lie at residues 472 to 482 (ENQTTEIFRPG) and 474 to 482 (QTTEIFRPG). Residues 523–544 (AVGMLGAMFLGFLGAAGSTMGA) form a fusion peptide region. An immunosuppression region spans residues 586-604 (KQLQARILAVERYLKDQQL). A disulfide bridge links cysteine 610 with cysteine 616. Asparagine 623, asparagine 628, asparagine 637, and asparagine 649 each carry an N-linked (GlcNAc...) asparagine; by host glycan. The stretch at 645 to 679 (REIDNYTHLIYTLIEESQNQQEKNQQELLQLDKWA) forms a coiled coil. The interval 674–695 (QLDKWASLWTWSDITKWLWYIK) is MPER; binding to GalCer. The chain crosses the membrane as a helical span at residues 697–717 (FIMIVGGLIGLRIVFAVLSIV). At 718-868 (NRVRQGYSPL…IRQGFERALL (151 aa)) the chain is on the cytoplasmic side. Positions 724 to 727 (YSPL) match the YXXL motif; contains endocytosis signal motif. Residues 731–755 (TLLPNPRGPDRPEGTEEGGGERGRD) form a disordered region. The segment covering 738 to 755 (GPDRPEGTEEGGGERGRD) has biased composition (basic and acidic residues). Cysteine 776 carries the S-palmitoyl cysteine; by host lipid modification. Residues 867–868 (LL) carry the Di-leucine internalization motif motif.

The protein belongs to the HIV-1 env protein family. As to quaternary structure, the mature envelope protein (Env) consists of a homotrimer of non-covalently associated gp120-gp41 heterodimers. The resulting complex protrudes from the virus surface as a spike. There seems to be as few as 10 spikes on the average virion. Interacts with host CD4, CCR5 and CXCR4. Gp120 also interacts with the C-type lectins CD209/DC-SIGN and CLEC4M/DC-SIGNR (collectively referred to as DC-SIGN(R)). Gp120 and gp41 interact with GalCer. Gp120 interacts with host ITGA4/ITGB7 complex; on CD4+ T-cells, this interaction results in rapid activation of integrin ITGAL/LFA-1, which facilitates efficient cell-to-cell spreading of HIV-1. Gp120 interacts with cell-associated heparan sulfate; this interaction increases virus infectivity on permissive cells and may be involved in infection of CD4- cells. In terms of assembly, the mature envelope protein (Env) consists of a homotrimer of non-covalently associated gp120-gp41 heterodimers. The resulting complex protrudes from the virus surface as a spike. There seems to be as few as 10 spikes on the average virion. In terms of processing, highly glycosylated by host. The high number of glycan on the protein is reffered to as 'glycan shield' because it contributes to hide protein sequence from adaptive immune system. Palmitoylation of the transmembrane protein and of Env polyprotein (prior to its proteolytic cleavage) is essential for their association with host cell membrane lipid rafts. Palmitoylation is therefore required for envelope trafficking to classical lipid rafts, but not for viral replication. Post-translationally, specific enzymatic cleavages in vivo yield mature proteins. Envelope glycoproteins are synthesized as an inactive precursor that is heavily N-glycosylated and processed likely by host cell furin in the Golgi to yield the mature SU and TM proteins. The cleavage site between SU and TM requires the minimal sequence [KR]-X-[KR]-R. About 2 of the 9 disulfide bonds of gp41 are reduced by P4HB/PDI, following binding to CD4 receptor.

It localises to the virion membrane. The protein resides in the host cell membrane. Its subcellular location is the host endosome membrane. Oligomerizes in the host endoplasmic reticulum into predominantly trimers. In a second time, gp160 transits in the host Golgi, where glycosylation is completed. The precursor is then proteolytically cleaved in the trans-Golgi and thereby activated by cellular furin or furin-like proteases to produce gp120 and gp41. Its function is as follows. Attaches the virus to the host lymphoid cell by binding to the primary receptor CD4. This interaction induces a structural rearrangement creating a high affinity binding site for a chemokine coreceptor like CXCR4 and/or CCR5. Acts as a ligand for CD209/DC-SIGN and CLEC4M/DC-SIGNR, which are respectively found on dendritic cells (DCs), and on endothelial cells of liver sinusoids and lymph node sinuses. These interactions allow capture of viral particles at mucosal surfaces by these cells and subsequent transmission to permissive cells. HIV subverts the migration properties of dendritic cells to gain access to CD4+ T-cells in lymph nodes. Virus transmission to permissive T-cells occurs either in trans (without DCs infection, through viral capture and transmission), or in cis (following DCs productive infection, through the usual CD4-gp120 interaction), thereby inducing a robust infection. In trans infection, bound virions remain infectious over days and it is proposed that they are not degraded, but protected in non-lysosomal acidic organelles within the DCs close to the cell membrane thus contributing to the viral infectious potential during DCs' migration from the periphery to the lymphoid tissues. On arrival at lymphoid tissues, intact virions recycle back to DCs' cell surface allowing virus transmission to CD4+ T-cells. In terms of biological role, acts as a class I viral fusion protein. Under the current model, the protein has at least 3 conformational states: pre-fusion native state, pre-hairpin intermediate state, and post-fusion hairpin state. During fusion of viral and target intracellular membranes, the coiled coil regions (heptad repeats) assume a trimer-of-hairpins structure, positioning the fusion peptide in close proximity to the C-terminal region of the ectodomain. The formation of this structure appears to drive apposition and subsequent fusion of viral and target cell membranes. Complete fusion occurs in host cell endosomes and is dynamin-dependent, however some lipid transfer might occur at the plasma membrane. The virus undergoes clathrin-dependent internalization long before endosomal fusion, thus minimizing the surface exposure of conserved viral epitopes during fusion and reducing the efficacy of inhibitors targeting these epitopes. Membranes fusion leads to delivery of the nucleocapsid into the cytoplasm. This chain is Envelope glycoprotein gp160, found in Human immunodeficiency virus type 1 group M subtype B (isolate CDC-451) (HIV-1).